The following is an 865-amino-acid chain: Aconitate hydratase B (865 aa).

Residues Arg-191, 244 to 246 (SSR), 414 to 416 (QDT), and Ser-498 contribute to the substrate site. [4Fe-4S] cluster is bound by residues Cys-710, Cys-769, and Cys-772. Arg-791 and Arg-796 together coordinate substrate.

Belongs to the aconitase/IPM isomerase family. Monomer. AcnB can also form a homodimer. The monomer-homodimer transition is dependent on iron availability and the carboxymethylation of C-273 inhibits the dimer formation. [4Fe-4S] cluster serves as cofactor.

It carries out the reaction citrate = D-threo-isocitrate. The enzyme catalyses (2S,3R)-3-hydroxybutane-1,2,3-tricarboxylate = 2-methyl-cis-aconitate + H2O. The protein operates within organic acid metabolism; propanoate degradation. It functions in the pathway carbohydrate metabolism; tricarboxylic acid cycle; isocitrate from oxaloacetate: step 2/2. Involved in the catabolism of short chain fatty acids (SCFA) via the tricarboxylic acid (TCA)(acetyl degradation route) and the 2-methylcitrate cycle I (propionate degradation route). Catalyzes the reversible isomerization of citrate to isocitrate via cis-aconitate. Also catalyzes the hydration of 2-methyl-cis-aconitate to yield (2R,3S)-2-methylisocitrate. The apo form of AcnB functions as a RNA-binding regulatory protein. During oxidative stress inactive AcnB apo-enzyme without iron sulfur clusters binds the acnB mRNA 3' UTRs (untranslated regions), stabilizes acnB mRNA and increases AcnB synthesis, thus mediating a post-transcriptional positive autoregulatory switch. AcnB also decreases the stability of the sodA transcript. This Escherichia coli (strain K12) protein is Aconitate hydratase B.